The primary structure comprises 394 residues: Elongation factor Tu 2 (394 aa).

The region spanning 10-204 (KPHVNVGTIG…YLDSYIPEPE (195 aa)) is the tr-type G domain. A G1 region spans residues 19–26 (GHVDHGKT). A GTP-binding site is contributed by 19–26 (GHVDHGKT). T26 lines the Mg(2+) pocket. Positions 60-64 (GITIN) are G2. Residues 81–84 (DCPG) form a G3 region. GTP-binding positions include 81-85 (DCPGH) and 136-139 (NKCD). Residues 136–139 (NKCD) are G4. A G5 region spans residues 174–176 (SAL).

The protein belongs to the TRAFAC class translation factor GTPase superfamily. Classic translation factor GTPase family. EF-Tu/EF-1A subfamily. In terms of assembly, monomer.

Its subcellular location is the cytoplasm. It carries out the reaction GTP + H2O = GDP + phosphate + H(+). Its function is as follows. GTP hydrolase that promotes the GTP-dependent binding of aminoacyl-tRNA to the A-site of ribosomes during protein biosynthesis. The polypeptide is Elongation factor Tu 2 (Serratia proteamaculans (strain 568)).